The primary structure comprises 779 residues: Subtilisin-like protease SBT3.18 (779 aa).

The signal sequence occupies residues 1–21 (MYFWVMFFTLMIKVKLYITNG). A propeptide spans 22–109 (DIFQNRPTVY…VFKSKSLKLH (88 aa)) (activation peptide). An Inhibitor I9 domain is found at 30–109 (VYVVYLGANR…VFKSKSLKLH (80 aa)). The N-linked (GlcNAc...) asparagine glycan is linked to asparagine 84. The Peptidase S8 domain occupies 113–621 (SWDFLGLAVD…AGHINPLKAM (509 aa)). Active-site charge relay system residues include aspartate 144 and histidine 221. Asparagine 236 and asparagine 406 each carry an N-linked (GlcNAc...) asparagine glycan. Serine 553 serves as the catalytic Charge relay system.

This sequence belongs to the peptidase S8 family.

It is found in the secreted. This chain is Subtilisin-like protease SBT3.18, found in Arabidopsis thaliana (Mouse-ear cress).